A 730-amino-acid chain; its full sequence is MGDSKCPYRDANVAGGGTHNKDWWPETLKLDALRQHTAESNPLGKDFDYASAFKTLDYEGLKKDLKDLMTDSQDWWPADFGHYGGFFVRMAWHSAGTYRSIDGRGGGGQGQHRFAPLNSWPDNGNLDKARRLLWPIKQKYGNKISWADLYLLTGNVAIESMGGKTFGFACGRPDTWEADDATFWGNETKWLGNDARYKNGSKDPKDIYTRQLEKPLSAVHMGLIYVNPEGPDGIPDPVASARDIRTTFRRMAMNDEETVALIAGGHTFGKTHGAAPATHLGKEPEGAPIEAQGLGWANSYRSGKGPDTITSGLEVIWTKTPINWSNHYLEYLFKYDWELTKSPGGANQWTAKNAEAFIPDAFDPNKKHPPRMLTTDLALRHDKEYEKISLRFLENPDQFADAFARAWFKLLHRDMGPRSRWLGPEIPKEELIWEDPIPEIDHPIISQEDINNLKKEILSSGVGHNKLIQTAWASASTFRGGDKRGGANGARIRLAPQKDWKVNNPPQLTCVLETLGKIQSSFNSSQTGGKIVSLADLIILAGCAALEKAAGVPVPFSPGRADASQEQTDIKSFSNLEPVADGFRNFGRSTPRARAEHMLVDRAQLLTLTPPELTALVGGLRVLDTNFDGSSCGVFTKRPGQLTNDFFVNLLDPAISWKGIDEDEFFEGIDRKTDEKKWIGSRADLVFGSQAELRAIAEVYGSADGNEKLIKDFIAAWNKVMNLDLFNLAH.

The tryptophyl-tyrosyl-methioninium (Trp-Tyr) (with M-251) cross-link spans 92-225 (WHSAGTYRSI…LSAVHMGLIY (134 aa)). The active-site Proton acceptor is H93. Residues 225–251 (YVNPEGPDGIPDPVASARDIRTTFRRM) constitute a cross-link (tryptophyl-tyrosyl-methioninium (Tyr-Met) (with W-92)). A heme b-binding site is contributed by H266.

It belongs to the peroxidase family. Peroxidase/catalase subfamily. In terms of assembly, homodimer or homotetramer. The cofactor is heme b. Post-translationally, formation of the three residue Trp-Tyr-Met cross-link is important for the catalase, but not the peroxidase activity of the enzyme.

The protein resides in the cytoplasm. It carries out the reaction H2O2 + AH2 = A + 2 H2O. The enzyme catalyses 2 H2O2 = O2 + 2 H2O. Functionally, bifunctional enzyme with both catalase and broad-spectrum peroxidase activity. This Blumeria hordei (Barley powdery mildew) protein is Catalase-peroxidase.